Reading from the N-terminus, the 472-residue chain is Interferon-induced protein with tetratricopeptide repeats 2 (472 aa).

At Ser-2 the chain carries N-acetylserine. 9 TPR repeats span residues 51–89, 90–135, 136–171, 172–208, 244–277, 278–333, 334–364, 365–403, and 404–445; these read ATMCNILAYVKHCRGLNEAALQCLGEAEGFIQQQHPDQV, EIRS…RIEN, PALDCEEGWARLKCTKNQNERVKVCFQKALEKDPKN, PEFTSGWAIAFYRLDDWPARNYCIDSLEQAIQLSPDN, IDTLLRAARFYCKVYDTDRAIQLLRKALEKLPNN, AYVH…MLEY, SCSFLADLYIIAKKYDEADYYFQKELSKDLP, PGPKQLLHLRYGNFQFFQMKRQDKAIYHYMEGVKIKKKT, and IPQK…GGQQ. The segment at 441–472 is disordered; that stretch reads GGGQQADKDSERGVDSANQVPSASLDEDGAEY.

This sequence belongs to the IFIT family. In terms of assembly, domain-swapped homodimer. Component of an interferon-dependent multiprotein complex, at least composed of IFIT1, IFIT2 and IFIT3. Interacts with IFIT1 and IFIT3. Interacts with STING1/MITA and disrupts its interaction with MAVS or TBK1. Interacts with EIF3C.

The protein resides in the cytoplasm. It localises to the endoplasmic reticulum. IFN-induced antiviral protein which inhibits expression of viral messenger RNAs lacking 2'-O-methylation of the 5' cap. The ribose 2'-O-methylation would provide a molecular signature to distinguish between self and non-self mRNAs by the host during viral infection. Viruses evolved several ways to evade this restriction system such as encoding their own 2'-O-methylase for their mRNAs or by stealing host cap containing the 2'-O-methylation (cap snatching mechanism). Binds AU-rich viral RNAs, with or without 5' triphosphorylation, RNA-binding is required for antiviral activity. Can promote apoptosis. The chain is Interferon-induced protein with tetratricopeptide repeats 2 (Ifit2) from Mus musculus (Mouse).